A 693-amino-acid chain; its full sequence is Elongation factor G (693 aa).

The tr-type G domain occupies 8 to 282 (EKTRNIGIMA…AVIDYLPSPL (275 aa)). GTP contacts are provided by residues 17–24 (AHVDAGKT), 81–85 (DTPGH), and 135–138 (NKMD).

It belongs to the TRAFAC class translation factor GTPase superfamily. Classic translation factor GTPase family. EF-G/EF-2 subfamily.

The protein resides in the cytoplasm. Functionally, catalyzes the GTP-dependent ribosomal translocation step during translation elongation. During this step, the ribosome changes from the pre-translocational (PRE) to the post-translocational (POST) state as the newly formed A-site-bound peptidyl-tRNA and P-site-bound deacylated tRNA move to the P and E sites, respectively. Catalyzes the coordinated movement of the two tRNA molecules, the mRNA and conformational changes in the ribosome. The sequence is that of Elongation factor G from Streptococcus suis (strain 05ZYH33).